The primary structure comprises 393 residues: High mobility group protein DSP1 (393 aa).

The disordered stretch occupies residues 153 to 179 (QMQQQQQQQNVINSASPMSRVKADAKP). 2 DNA-binding regions (HMG box) span residues 179–249 (PRGR…QNYV) and 271–339 (PKRS…TEYK). A compositionally biased stretch (low complexity) spans 364 to 374 (LLAAAAQQQHQ). The disordered stretch occupies residues 364–393 (LLAAAAQQQHQQLEEQHDDDDGDGDDDENQ). The span at 379–393 (QHDDDDGDGDDDENQ) shows a compositional bias: acidic residues.

The protein belongs to the HMGB family.

The protein resides in the nucleus. It is found in the chromosome. Its function is as follows. Binds preferentially single-stranded DNA and unwinds double-stranded DNA. In Drosophila melanogaster (Fruit fly), this protein is High mobility group protein DSP1 (Dsp1).